The primary structure comprises 578 residues: Probable arginine--tRNA ligase, mitochondrial (578 aa).

Residues 1 to 16 (MACGFRRAIACQLSRV) constitute a mitochondrion transit peptide. L-arginine is bound by residues 133–135 (SPN), His-144, Tyr-322, Asp-326, and Gln-350. A 'HIGH' region motif is present at residues 133 to 144 (SPNVAKKFHVGH). Lys-568 bears the N6-acetyllysine mark.

It belongs to the class-I aminoacyl-tRNA synthetase family.

It localises to the mitochondrion membrane. The enzyme catalyses tRNA(Arg) + L-arginine + ATP = L-arginyl-tRNA(Arg) + AMP + diphosphate. In terms of biological role, catalyzes the attachment of arginine to tRNA(Arg) in a two-step reaction: arginine is first activated by ATP to form Arg-AMP and then transferred to the acceptor end of tRNA(Arg). The chain is Probable arginine--tRNA ligase, mitochondrial (RARS2) from Homo sapiens (Human).